We begin with the raw amino-acid sequence, 310 residues long: Oxygen-dependent coproporphyrinogen-III oxidase (310 aa).

Ser97 is a binding site for substrate. The a divalent metal cation site is built by His101 and His111. Residue His111 is the Proton donor of the active site. Residue 113–115 (NFR) participates in substrate binding. A divalent metal cation contacts are provided by His150 and His180. The segment at 245–280 (YVEFNLLYDRGTRFGLEFGGRTESILMSLPPRVVWR) is important for dimerization. Substrate is bound at residue 263 to 265 (GGR).

This sequence belongs to the aerobic coproporphyrinogen-III oxidase family. In terms of assembly, homodimer. A divalent metal cation is required as a cofactor.

Its subcellular location is the cytoplasm. The catalysed reaction is coproporphyrinogen III + O2 + 2 H(+) = protoporphyrinogen IX + 2 CO2 + 2 H2O. Its pathway is porphyrin-containing compound metabolism; protoporphyrin-IX biosynthesis; protoporphyrinogen-IX from coproporphyrinogen-III (O2 route): step 1/1. In terms of biological role, involved in the heme biosynthesis. Catalyzes the aerobic oxidative decarboxylation of propionate groups of rings A and B of coproporphyrinogen-III to yield the vinyl groups in protoporphyrinogen-IX. The polypeptide is Oxygen-dependent coproporphyrinogen-III oxidase (Coxiella burnetii (strain RSA 331 / Henzerling II)).